The sequence spans 127 residues: Large ribosomal subunit protein bL17 (127 aa).

The protein belongs to the bacterial ribosomal protein bL17 family. Part of the 50S ribosomal subunit. Contacts protein L32.

The polypeptide is Large ribosomal subunit protein bL17 (Chromohalobacter salexigens (strain ATCC BAA-138 / DSM 3043 / CIP 106854 / NCIMB 13768 / 1H11)).